Here is a 337-residue protein sequence, read N- to C-terminus: Perakine reductase (337 aa).

Residue Y57 is the Proton donor of the active site. A substrate-binding site is contributed by H126. An NADP(+)-binding site is contributed by 205–214; sequence SPIGRGLFAG.

This sequence belongs to the aldo/keto reductase family.

It carries out the reaction raucaffrinoline + NADP(+) = perakine + NADPH + H(+). Its function is as follows. Aldo-keto reductase involved in the biosynthesis of monoterpenoid indole alkaloids. Broad substrate specificity enzyme with a high selectivity in the group of alkaloids. Can use perakine, 19(S),20(R)-dihydro-peraksine-17,21-al, cinnamic aldehyde, p-coumaric aldehyde and 3-(3,4,5-trimethoxyphenyl)propanal as substrates, but not ketosteroids such as progesterone. NADPH could not be replaced by NADH. This chain is Perakine reductase (PR), found in Rauvolfia serpentina (Serpentine wood).